The following is a 124-amino-acid chain: Small ribosomal subunit protein uS13 (124 aa).

The segment at 95 to 124 (GLPVRGQRTKTNARTRKGPKRTIAGKKKAK) is disordered.

The protein belongs to the universal ribosomal protein uS13 family. As to quaternary structure, part of the 30S ribosomal subunit. Forms a loose heterodimer with protein S19. Forms two bridges to the 50S subunit in the 70S ribosome.

In terms of biological role, located at the top of the head of the 30S subunit, it contacts several helices of the 16S rRNA. In the 70S ribosome it contacts the 23S rRNA (bridge B1a) and protein L5 of the 50S subunit (bridge B1b), connecting the 2 subunits; these bridges are implicated in subunit movement. Contacts the tRNAs in the A and P-sites. The chain is Small ribosomal subunit protein uS13 from Rhodococcus erythropolis (strain PR4 / NBRC 100887).